The following is a 583-amino-acid chain: ATP-dependent lipid A-core flippase (583 aa).

A run of 7 helical transmembrane segments spans residues 18–38, 65–85, 105–127, 143–163, 167–187, 252–272, and 277–297; these read LWPI…TLII, IFMW…MSGF, LLFN…ATLM, GALI…IMMF, WQLS…IKLV, VFEP…LYIA, and VIEM…IALM. Positions 30 to 312 constitute an ABC transmembrane type-1 domain; it reads IIASITLIIN…LTNVSAQFQR (283 aa). Residues 344 to 580 enclose the ABC transporter domain; that stretch reads IIFDNVTFFY…KGVYSQLYKF (237 aa). 378–385 contributes to the ATP binding site; the sequence is GRSGSGKS.

This sequence belongs to the ABC transporter superfamily. Lipid exporter (TC 3.A.1.106) family. Homodimer.

The protein resides in the cell inner membrane. It catalyses the reaction ATP + H2O + lipid A-core oligosaccharideSide 1 = ADP + phosphate + lipid A-core oligosaccharideSide 2.. Functionally, involved in lipopolysaccharide (LPS) biosynthesis. Translocates lipid A-core from the inner to the outer leaflet of the inner membrane. Transmembrane domains (TMD) form a pore in the inner membrane and the ATP-binding domain (NBD) is responsible for energy generation. The polypeptide is ATP-dependent lipid A-core flippase (Blochmanniella floridana).